Reading from the N-terminus, the 169-residue chain is Sorting nexin-24 (169 aa).

An N-acetylmethionine modification is found at Met-1. The 125-residue stretch at 1–125 (MEVYIPSFRY…SFDETESEES (125 aa)) folds into the PX domain. A 1,2-diacyl-sn-glycero-3-phospho-(1D-myo-inositol-3-phosphate) is bound by residues Arg-38, Ser-40, Lys-61, and Arg-74. A phosphoserine mark is found at Ser-113 and Ser-116.

This sequence belongs to the sorting nexin family.

Its subcellular location is the cytoplasmic vesicle membrane. In terms of biological role, may be involved in several stages of intracellular trafficking. This Bos taurus (Bovine) protein is Sorting nexin-24 (SNX24).